The primary structure comprises 477 residues: Glutamyl-tRNA(Gln) amidotransferase subunit A (477 aa).

Residues lysine 71 and serine 146 each act as charge relay system in the active site. Serine 170 (acyl-ester intermediate) is an active-site residue.

Belongs to the amidase family. GatA subfamily. As to quaternary structure, heterotrimer of A, B and C subunits.

The catalysed reaction is L-glutamyl-tRNA(Gln) + L-glutamine + ATP + H2O = L-glutaminyl-tRNA(Gln) + L-glutamate + ADP + phosphate + H(+). Functionally, allows the formation of correctly charged Gln-tRNA(Gln) through the transamidation of misacylated Glu-tRNA(Gln) in organisms which lack glutaminyl-tRNA synthetase. The reaction takes place in the presence of glutamine and ATP through an activated gamma-phospho-Glu-tRNA(Gln). The sequence is that of Glutamyl-tRNA(Gln) amidotransferase subunit A from Halothermothrix orenii (strain H 168 / OCM 544 / DSM 9562).